Consider the following 524-residue polypeptide: Cytokinin dehydrogenase 7 (524 aa).

Positions 1-22 (MAARCSIAFMIMASCLSVVVSG) are cleaved as a signal peptide. The N-linked (GlcNAc...) asparagine glycan is linked to Asn-42. The FAD-binding PCMH-type domain occupies 55-233 (VAAAPEAVLH…TRARIGLMPA (179 aa)). 2 residues coordinate FAD: Gly-91 and Gly-93. Residue His-94 is modified to Pros-8alpha-FAD histidine. Residues Ser-95 and Gln-99 each contribute to the FAD site. Asn-121 is a glycosylation site (N-linked (GlcNAc...) asparagine). 5 residues coordinate FAD: Asp-157, Thr-162, Ser-168, Ile-172, and Ile-223. Asn-277 and Asn-320 each carry an N-linked (GlcNAc...) asparagine glycan. FAD is bound by residues Tyr-472, Ser-507, and Gln-510.

The protein belongs to the oxygen-dependent FAD-linked oxidoreductase family. In terms of assembly, monomer. It depends on FAD as a cofactor.

It localises to the secreted. Its subcellular location is the extracellular space. It carries out the reaction N(6)-dimethylallyladenine + A + H2O = 3-methyl-2-butenal + adenine + AH2. In terms of biological role, catalyzes the oxidation of cytokinins, a family of N(6)-substituted adenine derivatives that are plant hormones, where the substituent is an isopentenyl group. The chain is Cytokinin dehydrogenase 7 (CKX7) from Oryza sativa subsp. japonica (Rice).